The primary structure comprises 36 residues: Photosystem I reaction center subunit VIII (36 aa).

Residues 9–29 (ILVPLVGLVFPAIAMASLFLY) form a helical membrane-spanning segment.

The protein belongs to the PsaI family.

The protein resides in the plastid. The protein localises to the chloroplast thylakoid membrane. In terms of biological role, may help in the organization of the PsaL subunit. The chain is Photosystem I reaction center subunit VIII from Oltmannsiellopsis viridis (Marine flagellate).